The chain runs to 334 residues: Oligopeptide transport ATP-binding protein OppF (334 aa).

The ABC transporter domain maps to 12-265 (LEIADLKVHF…PLHPYTRALM (254 aa)). 57-64 (GESGCGKS) lines the ATP pocket.

Belongs to the ABC transporter superfamily. As to quaternary structure, the complex is composed of two ATP-binding proteins (OppD and OppF), two transmembrane proteins (OppB and OppC) and a solute-binding protein (OppA or MppA).

The protein localises to the cell inner membrane. The enzyme catalyses a [peptide](out) + ATP + H2O = a [peptide](in) + ADP + phosphate + H(+). The catalysed reaction is L-alanyl-gamma-D-glutamyl-meso-2,6-diaminopimelate(out) + ATP + H2O = L-alanyl-gamma-D-glutamyl-meso-2,6-diaminopimelate(in) + ADP + phosphate + H(+). Part of the ABC transporter complex OppABCDF involved in the uptake of oligopeptides and of the ABC transporter complex MppA-OppBCDF involved in the uptake of the cell wall murein tripeptide L-alanyl-gamma-D-glutamyl-meso-diaminopimelate. Probably responsible for energy coupling to the transport system. Plays an important nutritional role and is involved in the recycling of cell wall peptides. The protein is Oligopeptide transport ATP-binding protein OppF (oppF) of Escherichia coli (strain K12).